Consider the following 35-residue polypeptide: Photosystem II reaction center protein Psb30 (35 aa).

Residues 7-27 form a helical membrane-spanning segment; the sequence is LIANFGALALITLAGPAVIFI.

The protein belongs to the Psb30/Ycf12 family. PSII is composed of 1 copy each of membrane proteins PsbA, PsbB, PsbC, PsbD, PsbE, PsbF, PsbH, PsbI, PsbJ, PsbK, PsbL, PsbM, PsbT, PsbX, PsbY, PsbZ, Psb30/Ycf12, peripheral proteins PsbO, CyanoQ (PsbQ), PsbU, PsbV and a large number of cofactors. It forms dimeric complexes.

The protein resides in the cellular thylakoid membrane. Functionally, a core subunit of photosystem II (PSII), probably helps stabilize the reaction center. In Synechococcus sp. (strain CC9311), this protein is Photosystem II reaction center protein Psb30.